A 460-amino-acid polypeptide reads, in one-letter code: Photosystem II CP43 reaction center protein (460 aa).

The Cytoplasmic portion of the chain corresponds to Met1–Lys35. The chain crosses the membrane as a helical span at residues Leu36 to Glu58. The Lumenal, thylakoid segment spans residues Val59–Phe98. Residues Phe99–Leu121 traverse the membrane as a helical segment. Over Arg122 to Asn142 the chain is Cytoplasmic. A helical membrane pass occupies residues Gln143–Lys165. Over Ala166–Ile220 the chain is Lumenal, thylakoid. A helical transmembrane segment spans residues Ile221 to Leu240. The Cytoplasmic segment spans residues Thr241–Gly255. The chain crosses the membrane as a helical span at residues Glu256 to Phe276. Over Val277 to Ala411 the chain is Lumenal, thylakoid. 2 residues coordinate [CaMn4O5] cluster: Glu341 and Arg344. Residues Trp412–Arg436 traverse the membrane as a helical segment. Residues Ala437–Asp460 lie on the Cytoplasmic side of the membrane.

The protein belongs to the PsbB/PsbC family. PsbC subfamily. In terms of assembly, PSII is composed of 1 copy each of membrane proteins PsbA, PsbB, PsbC, PsbD, PsbE, PsbF, PsbH, PsbI, PsbJ, PsbK, PsbL, PsbM, PsbT, PsbX, PsbY, PsbZ, Psb30/Ycf12, peripheral proteins PsbO, CyanoQ (PsbQ), PsbU, PsbV and a large number of cofactors. It forms dimeric complexes. Binds multiple chlorophylls and provides some of the ligands for the Ca-4Mn-5O cluster of the oxygen-evolving complex. It may also provide a ligand for a Cl- that is required for oxygen evolution. PSII binds additional chlorophylls, carotenoids and specific lipids. is required as a cofactor.

The protein localises to the cellular thylakoid membrane. One of the components of the core complex of photosystem II (PSII). PSII binds chlorophyll and helps catalyze the primary light-induced photochemical processes of PSII. PSII is a light-driven water:plastoquinone oxidoreductase, using light energy to abstract electrons from H(2)O, generating O(2) and a proton gradient subsequently used for ATP formation. Required for correct assembly of PSII. The sequence is that of Photosystem II CP43 reaction center protein from Synechocystis sp. (strain ATCC 27184 / PCC 6803 / Kazusa).